The primary structure comprises 277 residues: 3-methyl-2-oxobutanoate hydroxymethyltransferase (277 aa).

Positions 53 and 96 each coordinate Mg(2+). 3-methyl-2-oxobutanoate is bound by residues 53 to 54 (DS), Asp-96, and Lys-126. A Mg(2+)-binding site is contributed by Glu-128. Catalysis depends on Glu-195, which acts as the Proton acceptor.

It belongs to the PanB family. Homodecamer; pentamer of dimers. Mg(2+) is required as a cofactor.

The protein localises to the cytoplasm. The catalysed reaction is 3-methyl-2-oxobutanoate + (6R)-5,10-methylene-5,6,7,8-tetrahydrofolate + H2O = 2-dehydropantoate + (6S)-5,6,7,8-tetrahydrofolate. The protein operates within cofactor biosynthesis; (R)-pantothenate biosynthesis; (R)-pantoate from 3-methyl-2-oxobutanoate: step 1/2. In terms of biological role, catalyzes the reversible reaction in which hydroxymethyl group from 5,10-methylenetetrahydrofolate is transferred onto alpha-ketoisovalerate to form ketopantoate. In Chlorobium luteolum (strain DSM 273 / BCRC 81028 / 2530) (Pelodictyon luteolum), this protein is 3-methyl-2-oxobutanoate hydroxymethyltransferase.